A 530-amino-acid chain; its full sequence is AAA-ATPase At3g28510 (530 aa).

Residues 5–25 (GAIWGITGTTVTSFMFFWAIY) traverse the membrane as a helical segment. Residue 250 to 257 (GPPGTGKS) participates in ATP binding. Disordered regions lie at residues 312 to 339 (QRKK…KVDD) and 463 to 530 (KARK…KSDS). Composition is skewed to basic and acidic residues over residues 326 to 339 (EEKK…KVDD) and 463 to 511 (KARK…KEEN). The span at 512–523 (GNVSQQNGNSID) shows a compositional bias: polar residues.

This sequence belongs to the AAA ATPase family. BCS1 subfamily. Mg(2+) serves as cofactor.

It is found in the membrane. The enzyme catalyses ATP + H2O = ADP + phosphate + H(+). The chain is AAA-ATPase At3g28510 from Arabidopsis thaliana (Mouse-ear cress).